Here is a 266-residue protein sequence, read N- to C-terminus: Orotidine 5'-phosphate decarboxylase (266 aa).

Substrate is bound by residues D38, 60-62, 92-101, Y218, and R236; these read KTH and DRKFADIGNT. The active-site Proton donor is the K94.

Belongs to the OMP decarboxylase family.

The enzyme catalyses orotidine 5'-phosphate + H(+) = UMP + CO2. Its pathway is pyrimidine metabolism; UMP biosynthesis via de novo pathway; UMP from orotate: step 2/2. In Candida maltosa (Yeast), this protein is Orotidine 5'-phosphate decarboxylase (URA3).